We begin with the raw amino-acid sequence, 262 residues long: Snake venom serine protease catroxase-1 (262 aa).

The signal sequence occupies residues 1-18 (MVLIRVLANLLILQLSYA). Residues 19–24 (QKSSEP) constitute a propeptide that is removed on maturation. Residues 25 to 250 (IIGGDECNRN…HLDWIQSIIA (226 aa)) enclose the Peptidase S1 domain. 6 cysteine pairs are disulfide-bonded: Cys-31–Cys-162, Cys-49–Cys-65, Cys-97–Cys-257, Cys-141–Cys-211, Cys-173–Cys-190, and Cys-201–Cys-226. The active-site Charge relay system is the His-64. Asn-102 carries an N-linked (GlcNAc...) asparagine glycan. Catalysis depends on Asp-109, which acts as the Charge relay system. An N-linked (GlcNAc...) asparagine glycan is attached at Asn-169. Ser-205 acts as the Charge relay system in catalysis.

Belongs to the peptidase S1 family. Snake venom subfamily. As to quaternary structure, monomer. Expressed by the venom gland.

It is found in the secreted. In terms of biological role, snake venom serine protease that may act in the hemostasis system of the prey. The sequence is that of Snake venom serine protease catroxase-1 from Crotalus atrox (Western diamondback rattlesnake).